The chain runs to 140 residues: Photosystem I reaction center subunit XI (140 aa).

3 helical membrane passes run 48–68, 79–99, and 119–139; these read LEIG…LGPL, LLSA…YGAV, and SGFL…LTLF.

The protein belongs to the PsaL family.

The protein resides in the plastid. The protein localises to the chloroplast thylakoid membrane. This Cyanidioschyzon merolae (strain NIES-3377 / 10D) (Unicellular red alga) protein is Photosystem I reaction center subunit XI.